Consider the following 56-residue polypeptide: Ovomucoid (56 aa).

Positions 6 to 56 constitute a Kazal-like domain; it reads VDCSEYPKPACMSEYRPLCGSDNKTYVNKCNFCNAVVESNGTLTLSHFGKC. Disulfide bonds link cysteine 8–cysteine 38, cysteine 16–cysteine 35, and cysteine 24–cysteine 56. Asparagine 45 is a glycosylation site (N-linked (GlcNAc...) asparagine).

The protein resides in the secreted. The protein is Ovomucoid of Colinus virginianus (Northern bobwhite).